A 248-amino-acid polypeptide reads, in one-letter code: PF03932 family protein CutC (248 aa).

This sequence belongs to the CutC family. Homodimer.

The protein resides in the cytoplasm. The polypeptide is PF03932 family protein CutC (Escherichia coli O9:H4 (strain HS)).